A 311-amino-acid chain; its full sequence is Methionyl-tRNA formyltransferase (311 aa).

A (6S)-5,6,7,8-tetrahydrofolate-binding site is contributed by Ser-110–Pro-113.

It belongs to the Fmt family.

The catalysed reaction is L-methionyl-tRNA(fMet) + (6R)-10-formyltetrahydrofolate = N-formyl-L-methionyl-tRNA(fMet) + (6S)-5,6,7,8-tetrahydrofolate + H(+). Attaches a formyl group to the free amino group of methionyl-tRNA(fMet). The formyl group appears to play a dual role in the initiator identity of N-formylmethionyl-tRNA by promoting its recognition by IF2 and preventing the misappropriation of this tRNA by the elongation apparatus. In Streptococcus agalactiae serotype Ia (strain ATCC 27591 / A909 / CDC SS700), this protein is Methionyl-tRNA formyltransferase.